The primary structure comprises 455 residues: D-inositol 3-phosphate glycosyltransferase (455 aa).

The disordered stretch occupies residues 1–25 (MSQHVSRLGGLRGRSHGHGAFGGPY). Histidine 45 contributes to the 1D-myo-inositol 3-phosphate binding site. UDP-N-acetyl-alpha-D-glucosamine contacts are provided by residues 51-52 (QP) and glycine 59. Residues 56–61 (DAGGMN), lysine 114, tyrosine 147, threonine 171, and arginine 191 each bind 1D-myo-inositol 3-phosphate. UDP-N-acetyl-alpha-D-glucosamine-binding residues include arginine 266 and lysine 271. Mg(2+) contacts are provided by tyrosine 341, arginine 342, and alanine 344. 2 residues coordinate UDP-N-acetyl-alpha-D-glucosamine: glutamate 354 and glutamate 362. Threonine 368 provides a ligand contact to Mg(2+).

It belongs to the glycosyltransferase group 1 family. MshA subfamily. As to quaternary structure, homodimer.

It carries out the reaction 1D-myo-inositol 3-phosphate + UDP-N-acetyl-alpha-D-glucosamine = 1D-myo-inositol 2-acetamido-2-deoxy-alpha-D-glucopyranoside 3-phosphate + UDP + H(+). Catalyzes the transfer of a N-acetyl-glucosamine moiety to 1D-myo-inositol 3-phosphate to produce 1D-myo-inositol 2-acetamido-2-deoxy-glucopyranoside 3-phosphate in the mycothiol biosynthesis pathway. The sequence is that of D-inositol 3-phosphate glycosyltransferase from Streptomyces bingchenggensis (strain BCW-1).